The chain runs to 565 residues: Proline--tRNA ligase (565 aa).

Belongs to the class-II aminoacyl-tRNA synthetase family. ProS type 1 subfamily. In terms of assembly, homodimer.

Its subcellular location is the cytoplasm. It catalyses the reaction tRNA(Pro) + L-proline + ATP = L-prolyl-tRNA(Pro) + AMP + diphosphate. Catalyzes the attachment of proline to tRNA(Pro) in a two-step reaction: proline is first activated by ATP to form Pro-AMP and then transferred to the acceptor end of tRNA(Pro). As ProRS can inadvertently accommodate and process non-cognate amino acids such as alanine and cysteine, to avoid such errors it has two additional distinct editing activities against alanine. One activity is designated as 'pretransfer' editing and involves the tRNA(Pro)-independent hydrolysis of activated Ala-AMP. The other activity is designated 'posttransfer' editing and involves deacylation of mischarged Ala-tRNA(Pro). The misacylated Cys-tRNA(Pro) is not edited by ProRS. This Lactobacillus gasseri (strain ATCC 33323 / DSM 20243 / BCRC 14619 / CIP 102991 / JCM 1131 / KCTC 3163 / NCIMB 11718 / NCTC 13722 / AM63) protein is Proline--tRNA ligase.